Reading from the N-terminus, the 130-residue chain is MTNAVLNEKNHSVTSEETKKERVRILAPRVDIYSDEENIYLLADLPGVEEKDVQVQLEKDQLIISGKTSNKDIQGELRYSEFRTGEYKRTFTLTESVEEDRISAVYKNGVLNLTLPKRKPLTKKIEVRSE.

The region spanning 21-130 (ERVRILAPRV…LTKKIEVRSE (110 aa)) is the sHSP domain.

Belongs to the small heat shock protein (HSP20) family.

The sequence is that of Probable 15 kDa heat shock protein (hsp15) from Leptospira interrogans serogroup Icterohaemorrhagiae serovar Lai (strain 56601).